We begin with the raw amino-acid sequence, 206 residues long: High frequency lysogenization protein HflD homolog (206 aa).

This sequence belongs to the HflD family.

It is found in the cytoplasm. It localises to the cell inner membrane. The protein is High frequency lysogenization protein HflD homolog of Marinobacter nauticus (strain ATCC 700491 / DSM 11845 / VT8) (Marinobacter aquaeolei).